We begin with the raw amino-acid sequence, 793 residues long: Toll-like receptor 6 (793 aa).

The N-terminal stretch at 1-23 (MIKDKESPIRSCHFVYIVALVFG) is a signal peptide. Residues 24-584 (TIIQFSDESE…FQVSELSCNT (561 aa)) are Extracellular-facing. LRR repeat units follow at residues 54-77 (TKVL…FLSG), 78-101 (LRVL…FNHD), 102-122 (LEYL…PITT), 123-147 (TLKH…GNLT), 148-168 (QLNF…LPIA), 169-196 (HLHL…ILNT), 197-219 (KKLH…SANS), 220-250 (LGCL…GGPT), 251-277 (LLNF…WPKP), 278-303 (IEYL…YKTT), 304-330 (LKAL…VFSE), 331-354 (MNIL…EPST), 355-378 (FKFL…TLAR), 379-404 (LETL…DMLS), 405-428 (LETL…SWVG), 429-449 (SIVV…RCLP), 450-473 (PRIK…TGLE), 474-495 (TLQE…GIFS), and 496-519 (SLSI…QSCQ). Asn-63 carries an N-linked (GlcNAc...) asparagine glycan. Residues Cys-117 and Cys-140 are joined by a disulfide bond. Asn-145 carries an N-linked (GlcNAc...) asparagine glycan. A disulfide bridge connects residues Cys-235 and Cys-265. Asn-253 and Asn-285 each carry an N-linked (GlcNAc...) asparagine glycan. A disulfide bridge links Cys-348 with Cys-373. N-linked (GlcNAc...) asparagine glycosylation occurs at Asn-359. N-linked (GlcNAc...) asparagine glycans are attached at residues Asn-423 and Asn-434. Cys-424 and Cys-447 are joined by a disulfide. The region spanning 520–575 (KIRSLKAGNNPFQCSCELRDFIQSVGQVSSDVVEGWPESYKCDYPESYKGTPLKDF) is the LRRCT domain. Residues 585–605 (ALLIITIVVPGLVLAVAVTVL) form a helical membrane-spanning segment. Over 606–793 (CIYLDLPWYL…KLMEKAAEIH (188 aa)) the chain is Cytoplasmic. The TIR domain maps to 640 to 781 (LQFHAFISYS…LFWANLRASI (142 aa)).

Belongs to the Toll-like receptor family. In terms of assembly, homodimer (via cytoplasmic TIR domain). Heterodimer with TLR2 via their respective extracellular domains. Binds MYD88 via their respective TIR domains. Interacts with CD36, following CD36 stimulation by oxLDL or amyloid-beta 42, and forms a heterodimer with TLR4. The trimeric complex is internalized and triggers inflammatory response. LYN kinase activity facilitates TLR4-TLR6 heterodimerization and signal initiation. The heterodimer TLR2:TLR6 interacts with CD14 and CD36 in response to triacylated lipopeptides. As to expression, highest expression levels seen in blood and lymph node, intermediate expression seen in spleen and lowest expression seen in the liver, lung and udder cistern.

Its subcellular location is the cell membrane. The protein resides in the cytoplasmic vesicle. It is found in the phagosome membrane. The protein localises to the membrane raft. It localises to the golgi apparatus. Its function is as follows. Participates in the innate immune response to Gram-positive bacteria and fungi. Specifically recognizes diacylated and, to a lesser extent, triacylated lipopeptides. In response to diacylated lipopeptides, forms the activation cluster TLR2:TLR6:CD14:CD36, this cluster triggers signaling from the cell surface and subsequently is targeted to the Golgi in a lipid-raft dependent pathway. Acts via MYD88 and TRAF6, leading to NF-kappa-B activation, cytokine secretion and the inflammatory response. Recognizes mycoplasmal macrophage-activating lipopeptide-2kD (MALP-2), soluble tuberculosis factor (STF), phenol-soluble modulin (PSM) and B.burgdorferi outer surface protein A lipoprotein (OspA-L) cooperatively with TLR2. In complex with TLR4, promotes sterile inflammation in monocytes/macrophages in response to oxidized low-density lipoprotein (oxLDL) or amyloid-beta 42. In this context, the initial signal is provided by oxLDL- or amyloid-beta 42-binding to CD36. This event induces the formation of a heterodimer of TLR4 and TLR6, which is rapidly internalized and triggers inflammatory response, leading to the NF-kappa-B-dependent production of CXCL1, CXCL2 and CCL9 cytokines, via MYD88 signaling pathway, and CCL5 cytokine, via TICAM1 signaling pathway, as well as IL1B secretion. The protein is Toll-like receptor 6 of Bos taurus (Bovine).